A 1541-amino-acid polypeptide reads, in one-letter code: ATP-binding cassette sub-family C member 2 (1541 aa).

The Extracellular segment spans residues 1–26; it reads MDKFCNSTFWDLSLLESPEADLPLCF. Asparagine 6 carries N-linked (GlcNAc...) asparagine glycosylation. The chain crosses the membrane as a helical span at residues 27–47; that stretch reads EQTVLVWIPLGFLWLLAPWQL. Residues 48-67 lie on the Cytoplasmic side of the membrane; sequence YSVYRSRTKRSSITKFYLAK. The helical transmembrane segment at 68-88 threads the bilayer; that stretch reads QVFVVFLLILAAIDLSLALTE. Residues 89–92 are Extracellular-facing; it reads DTGQ. Residues 93–113 traverse the membrane as a helical segment; sequence ATVPPVRYTNPILYLCTWLLV. Residues 114–125 lie on the Cytoplasmic side of the membrane; the sequence is LAVQHSRQWCVR. A helical membrane pass occupies residues 126-146; the sequence is KNSWFLSLFWILSVLCGVFQF. The Extracellular segment spans residues 147–164; the sequence is QTLIRALLKDSKSNMAYS. Residues 165-185 form a helical membrane-spanning segment; it reads YLFFVSYGFQIVLLILTAFSG. Over 186–309 the chain is Cytoplasmic; it reads PSDSTQTPSV…DYPKSWLIKS (124 aa). 2 positions are modified to phosphoserine: serine 279 and serine 281. A helical transmembrane segment spans residues 310-330; it reads LFKTFHVVILKSFILKLIHDL. Residues 318-601 enclose the ABC transmembrane type-1 1 domain; it reads ILKSFILKLI…LPMVTSSILQ (284 aa). The Extracellular portion of the chain corresponds to 331-356; sequence LVFLNPQLLKLLIGFVKSSNSYVWFG. The chain crosses the membrane as a helical span at residues 357 to 377; the sequence is YICAILMFAVTLIQSFCLQSY. The Cytoplasmic segment spans residues 378 to 433; sequence FQHCFVLGMCVRTTVMSSIYKKALTLSNLARKQYTIGETVNLMSVDSQKLMDATNY. A helical membrane pass occupies residues 434 to 454; it reads MQLVWSSVIQITLSIFFLWRE. Residues 455 to 457 are Extracellular-facing; that stretch reads LGP. Residues 458–478 traverse the membrane as a helical segment; that stretch reads SILAGVGVMVLLIPVNGVLAT. At 479–540 the chain is on the cytoplasmic side; sequence KIRNIQVQNM…NLLRFGQLQS (62 aa). A helical transmembrane segment spans residues 541-561; it reads LLIFILQITPILVSVVTFSVY. At 562 to 583 the chain is on the extracellular side; that stretch reads VLVDSANVLNAEKAFTSITLFN. A helical membrane pass occupies residues 584–604; the sequence is ILRFPLSMLPMVTSSILQASV. The Cytoplasmic portion of the chain corresponds to 605-967; that stretch reads SVDRLERYLG…VKFSIYLKYL (363 aa). An ABC transporter 1 domain is found at 633 to 857; the sequence is VKFSEASFTW…KGVFARNWKT (225 aa). 667–674 lines the ATP pocket; that stretch reads GTVGSGKS. 2 disordered regions span residues 862 to 881 and 901 to 923; these read SGPE…DDDD and RENS…GKSL. The residue at position 874 (serine 874) is a Phosphoserine. The span at 906–915 shows a compositional bias: low complexity; it reads RRTLSRSSRS. A phosphoserine mark is found at serine 922 and serine 926. The helical transmembrane segment at 968–988 threads the bilayer; the sequence is QAVGWWSILFIILFYGLNNVA. The ABC transmembrane type-1 2 domain maps to 975-1260; it reads ILFIILFYGL…LVRMTSEAET (286 aa). Residues 989 to 1029 lie on the Extracellular side of the membrane; the sequence is FIGSNLWLSAWTSDSDNLNGTNNSSSHRDMRIGVFGALGLA. N-linked (GlcNAc...) asparagine glycans are attached at residues asparagine 1007, asparagine 1010, and asparagine 1011. The chain crosses the membrane as a helical span at residues 1030-1050; it reads QGICLLISTLWSIYACRNASK. Over 1051–1093 the chain is Cytoplasmic; the sequence is ALHGQLLTNILRAPMRFFDTTPTGRIVNRFSGDISTVDDLLPQ. Residues 1094–1114 traverse the membrane as a helical segment; that stretch reads TLRSWMMCFFGIAGTLVMICM. Position 1115 (alanine 1115) is a topological domain, extracellular. A helical transmembrane segment spans residues 1116-1136; the sequence is TPVFAIIIIPLSILYISVQVF. Residues 1137–1207 are Cytoplasmic-facing; that stretch reads YVATSRQLRR…TSNRWLAIRL (71 aa). A helical membrane pass occupies residues 1208 to 1228; sequence ELVGNLVVFCSALLLVIYRKT. At 1229-1230 the chain is on the extracellular side; the sequence is LT. A helical membrane pass occupies residues 1231 to 1251; it reads GDVVGFVLSNALNITQTLNWL. Over 1252-1541 the chain is Cytoplasmic; it reads VRMTSEAETN…GIENVNHTEL (290 aa). The region spanning 1296–1530 is the ABC transporter 2 domain; that stretch reads IQFNNYQVRY…RGSFYLMAKE (235 aa). Residue 1330 to 1337 coordinates ATP; sequence GRTGAGKS. Residue serine 1434 is modified to Phosphoserine.

Belongs to the ABC transporter superfamily. ABCC family. Conjugate transporter (TC 3.A.1.208) subfamily. In terms of tissue distribution, mainly expressed in the liver.

The protein localises to the apical cell membrane. It catalyses the reaction an S-substituted glutathione(in) + ATP + H2O = an S-substituted glutathione(out) + ADP + phosphate + H(+). It carries out the reaction taurolithocholate 3-sulfate(in) + ATP + H2O = taurolithocholate 3-sulfate(out) + ADP + phosphate + H(+). The enzyme catalyses ATP + H2O + xenobioticSide 1 = ADP + phosphate + xenobioticSide 2.. The catalysed reaction is 17beta-estradiol 17-O-(beta-D-glucuronate)(in) + ATP + H2O = 17beta-estradiol 17-O-(beta-D-glucuronate)(out) + ADP + phosphate + H(+). It catalyses the reaction leukotriene C4(in) + ATP + H2O = leukotriene C4(out) + ADP + phosphate + H(+). It carries out the reaction (4Z,15Z)-bilirubin IXalpha C8-beta-D-glucuronoside(in) + ATP + H2O = (4Z,15Z)-bilirubin IXalpha C8-beta-D-glucuronoside(out) + ADP + phosphate + H(+). The enzyme catalyses (4Z,15Z)-bilirubin IXalpha C8,C12-beta-D-bisglucuronoside(in) + ATP + H2O = (4Z,15Z)-bilirubin IXalpha C8,C12-beta-D-bisglucuronoside(out) + ADP + phosphate + H(+). Its function is as follows. ATP-dependent transporter of the ATP-binding cassette (ABC) family that binds and hydrolyzes ATP to enable active transport of various substrates including many drugs, toxicants and endogenous compound across cell membranes. Transports a wide variety of conjugated organic anions such as sulfate-, glucuronide- and glutathione (GSH)-conjugates of endo- and xenobiotics substrates. Mediates hepatobiliary excretion of mono- and bis-glucuronidated bilirubin molecules and therefore play an important role in bilirubin detoxification. Also mediates hepatobiliary excretion of others glucuronide conjugates such as 17beta-estradiol 17-glucosiduronic acid and leukotriene C4. Transports sulfated bile salt such as taurolithocholate sulfate. Transports various anticancer drugs, such as anthracycline, vinca alkaloid and methotrexate and HIV-drugs such as protease inhibitors. The sequence is that of ATP-binding cassette sub-family C member 2 from Rattus norvegicus (Rat).